The primary structure comprises 67 residues: Large ribosomal subunit protein uL29 (67 aa).

Belongs to the universal ribosomal protein uL29 family.

The chain is Large ribosomal subunit protein uL29 from Wolbachia pipientis subsp. Culex pipiens (strain wPip).